The following is a 491-amino-acid chain: NADPH:adrenodoxin oxidoreductase, mitochondrial (491 aa).

The N-terminal 32 residues, 1-32 (MASRCWRWWGWSAWPRTRLPPAGSTPSFCHHF), are a transit peptide targeting the mitochondrion. Alanine 49, glutamate 69, leucine 77, and valine 113 together coordinate FAD. Residues 184-187 (QGNV), 228-229 (RR), and glutamate 240 each bind NADP(+). 2 positions are modified to phosphoserine: serine 310 and serine 317. FAD contacts are provided by residues tryptophan 398 and 405–407 (GVI). NADP(+) is bound at residue glycine 405.

Belongs to the ferredoxin--NADP reductase type 1 family. In terms of assembly, monomer. Interacts directly with FDX1. The cofactor is FAD.

It is found in the mitochondrion. Its subcellular location is the mitochondrion inner membrane. It carries out the reaction 2 reduced [adrenodoxin] + NADP(+) + H(+) = 2 oxidized [adrenodoxin] + NADPH. The enzyme catalyses 2 reduced [2Fe-2S]-[ferredoxin] + NADP(+) + H(+) = 2 oxidized [2Fe-2S]-[ferredoxin] + NADPH. The protein operates within steroid metabolism; cholesterol metabolism. Its function is as follows. Serves as the first electron transfer protein in all the mitochondrial P450 systems including cholesterol side chain cleavage in all steroidogenic tissues, steroid 11-beta hydroxylation in the adrenal cortex, 25-OH-vitamin D3-24 hydroxylation in the kidney, and sterol C-27 hydroxylation in the liver. Also acts as a ferredoxin--NADP(+) reductase essential for coenzyme Q biosynthesis: together with FDX2, transfers the electrons required for the hydroxylation reaction performed by COQ6. The sequence is that of NADPH:adrenodoxin oxidoreductase, mitochondrial from Homo sapiens (Human).